The following is a 214-amino-acid chain: Uracil phosphoribosyltransferase (214 aa).

5-phospho-alpha-D-ribose 1-diphosphate-binding positions include Arg107 and 135–143 (DPMLATGKT). Uracil contacts are provided by residues Ile198 and 203-205 (GDA). Asp204 contacts 5-phospho-alpha-D-ribose 1-diphosphate.

Belongs to the UPRTase family. It depends on Mg(2+) as a cofactor.

The enzyme catalyses UMP + diphosphate = 5-phospho-alpha-D-ribose 1-diphosphate + uracil. It participates in pyrimidine metabolism; UMP biosynthesis via salvage pathway; UMP from uracil: step 1/1. With respect to regulation, allosterically activated by GTP. Functionally, catalyzes the conversion of uracil and 5-phospho-alpha-D-ribose 1-diphosphate (PRPP) to UMP and diphosphate. The polypeptide is Uracil phosphoribosyltransferase (Aeropyrum pernix (strain ATCC 700893 / DSM 11879 / JCM 9820 / NBRC 100138 / K1)).